The sequence spans 336 residues: MELPILPTSIIGSYPKPRWLLRMYNLRELGRLPEEDFREAVRDASVAVLREHERAGIDIPWDGEMGRSEMTEYFTAKIAGFKFYGPIRVWGNAYFNKAAAVSKLEYREPLVLDEFRWVKENTTREIIKVPITGPYTIAEWSFNEYYSSKEELAFDLAKILNKEFKLLEKEGATFIQIDEPAMLNHPDEVSIAVEAINRAVKGVKVKFGLHVCYSNYYLLADYFDDIKVSQFALEAANRNFRDLDYLKKLTHQELGFGVVDVHNPRVESPEEVAKAIRKVMEYIEPERLYINPDCGLKLLDRRIAYQKLVNMVKGVEIVRRELAREGKTSIPFRREV.

The Zn(2+) site is built by H210, C212, E234, and C294.

This sequence belongs to the archaeal MetE family. It depends on Zn(2+) as a cofactor.

It functions in the pathway amino-acid biosynthesis; L-methionine biosynthesis via de novo pathway. In terms of biological role, catalyzes the transfer of a methyl group to L-homocysteine resulting in methionine formation. The physiological methyl donor is unknown. This chain is Methionine synthase, found in Thermococcus kodakarensis (strain ATCC BAA-918 / JCM 12380 / KOD1) (Pyrococcus kodakaraensis (strain KOD1)).